The chain runs to 599 residues: NADH-quinone oxidoreductase subunit C/D (599 aa).

Positions 1 to 189 (MTELMTQNSA…DPFVLTKQKE (189 aa)) are NADH dehydrogenase I subunit C. Positions 213 to 599 (DFMFLNLGPN…IDFVMSDVDR (387 aa)) are NADH dehydrogenase I subunit D.

This sequence in the N-terminal section; belongs to the complex I 30 kDa subunit family. In the C-terminal section; belongs to the complex I 49 kDa subunit family. As to quaternary structure, NDH-1 is composed of 13 different subunits. Subunits NuoB, CD, E, F, and G constitute the peripheral sector of the complex.

The protein resides in the cell inner membrane. It carries out the reaction a quinone + NADH + 5 H(+)(in) = a quinol + NAD(+) + 4 H(+)(out). NDH-1 shuttles electrons from NADH, via FMN and iron-sulfur (Fe-S) centers, to quinones in the respiratory chain. The immediate electron acceptor for the enzyme in this species is believed to be ubiquinone. Couples the redox reaction to proton translocation (for every two electrons transferred, four hydrogen ions are translocated across the cytoplasmic membrane), and thus conserves the redox energy in a proton gradient. The chain is NADH-quinone oxidoreductase subunit C/D from Sodalis glossinidius (strain morsitans).